Here is a 279-residue protein sequence, read N- to C-terminus: Acetylglutamate kinase (279 aa).

Residues 64-65 (GG), arginine 86, and asparagine 177 each bind substrate.

Belongs to the acetylglutamate kinase family. ArgB subfamily.

The protein resides in the cytoplasm. The enzyme catalyses N-acetyl-L-glutamate + ATP = N-acetyl-L-glutamyl 5-phosphate + ADP. It functions in the pathway amino-acid biosynthesis; L-arginine biosynthesis; N(2)-acetyl-L-ornithine from L-glutamate: step 2/4. Its function is as follows. Catalyzes the ATP-dependent phosphorylation of N-acetyl-L-glutamate. This Campylobacter jejuni subsp. jejuni serotype O:2 (strain ATCC 700819 / NCTC 11168) protein is Acetylglutamate kinase.